Consider the following 183-residue polypeptide: Bifunctional protein PyrR (183 aa).

A PRPP-binding motif is present at residues 102-114; sequence VVLVDDVLFSGRT.

Belongs to the purine/pyrimidine phosphoribosyltransferase family. PyrR subfamily.

The enzyme catalyses UMP + diphosphate = 5-phospho-alpha-D-ribose 1-diphosphate + uracil. In terms of biological role, regulates the transcription of the pyrimidine nucleotide (pyr) operon in response to exogenous pyrimidines. Functionally, also displays a weak uracil phosphoribosyltransferase activity which is not physiologically significant. This chain is Bifunctional protein PyrR, found in Leifsonia xyli subsp. xyli (strain CTCB07).